The chain runs to 683 residues: Long-chain-fatty-acid--CoA ligase 5 (683 aa).

The helical; Signal-anchor for type III membrane protein transmembrane segment at 12–32 (LPTPALICLLTFGTAIFLWLI) threads the bilayer. Over 33–683 (NRPQPVLPLI…IKSLYESIEE (651 aa)) the chain is Cytoplasmic. Residue Lys-361 is modified to N6-acetyllysine.

The protein belongs to the ATP-dependent AMP-binding enzyme family.

It localises to the mitochondrion. The protein resides in the endoplasmic reticulum. Its subcellular location is the mitochondrion outer membrane. The protein localises to the endoplasmic reticulum membrane. It is found in the cell membrane. The enzyme catalyses a long-chain fatty acid + ATP + CoA = a long-chain fatty acyl-CoA + AMP + diphosphate. It carries out the reaction (5Z,8Z,11Z,14Z)-eicosatetraenoate + ATP + CoA = (5Z,8Z,11Z,14Z)-eicosatetraenoyl-CoA + AMP + diphosphate. The catalysed reaction is hexadecanoate + ATP + CoA = hexadecanoyl-CoA + AMP + diphosphate. It catalyses the reaction (E)-hexadec-2-enoate + ATP + CoA = (2E)-hexadecenoyl-CoA + AMP + diphosphate. The enzyme catalyses 15-hydroxy-(5Z,8Z,11Z,13E)-eicosatetraenoate + ATP + CoA = 15-hydroxy-(5Z,8Z,11Z,13E)-eicosatetraenoyl-CoA + AMP + diphosphate. It carries out the reaction 12-hydroxy-(5Z,8Z,10E,14Z)-eicosatetraenoate + ATP + CoA = 12-hydroxy-(5Z,8Z,10E,14Z)-eicosatetraenoyl-CoA + AMP + diphosphate. The catalysed reaction is 5-hydroxy-(6E,8Z,11Z,14Z)-eicosatetraenoate + ATP + CoA = 5-hydroxy-(6E,8Z,11Z,14Z)-eicosatetraenoyl-CoA + AMP + diphosphate. It catalyses the reaction 14,15-epoxy-(5Z,8Z,11Z)-eicosatrienoate + ATP + CoA = 14,15-epoxy-(5Z,8Z,11Z)-eicosatrienoyl-CoA + AMP + diphosphate. The enzyme catalyses 11,12-epoxy-(5Z,8Z,14Z)-eicosatrienoate + ATP + CoA = 11,12-epoxy-(5Z,8Z,14Z)-eicosatrienoyl-CoA + AMP + diphosphate. It carries out the reaction (9Z)-octadecenoate + ATP + CoA = (9Z)-octadecenoyl-CoA + AMP + diphosphate. In terms of biological role, catalyzes the conversion of long-chain fatty acids to their active form acyl-CoAs for both synthesis of cellular lipids, and degradation via beta-oxidation. ACSL5 may activate fatty acids from exogenous sources for the synthesis of triacylglycerol destined for intracellular storage. It was suggested that it may also stimulate fatty acid oxidation. At the villus tip of the crypt-villus axis of the small intestine may sensitize epithelial cells to apoptosis specifically triggered by the death ligand TRAIL. May have a role in the survival of glioma cells. Utilizes a wide range of saturated fatty acids with a preference for C16-C18 unsaturated fatty acids. The chain is Long-chain-fatty-acid--CoA ligase 5 from Mus musculus (Mouse).